The following is a 160-amino-acid chain: Ribosomal RNA large subunit methyltransferase H (160 aa).

S-adenosyl-L-methionine-binding residues include Leu76 and Gly108.

The protein belongs to the RNA methyltransferase RlmH family. In terms of assembly, homodimer.

Its subcellular location is the cytoplasm. The enzyme catalyses pseudouridine(1915) in 23S rRNA + S-adenosyl-L-methionine = N(3)-methylpseudouridine(1915) in 23S rRNA + S-adenosyl-L-homocysteine + H(+). In terms of biological role, specifically methylates the pseudouridine at position 1915 (m3Psi1915) in 23S rRNA. This is Ribosomal RNA large subunit methyltransferase H from Rhodopseudomonas palustris (strain TIE-1).